Here is a 214-residue protein sequence, read N- to C-terminus: tRNA (guanine-N(7)-)-methyltransferase (214 aa).

Residues Glu-43, Glu-68, Asp-95, and Asp-117 each coordinate S-adenosyl-L-methionine. The active site involves Asp-117. Substrate-binding positions include Lys-121, Asp-153, and 190–193; that span reads TEYE.

Belongs to the class I-like SAM-binding methyltransferase superfamily. TrmB family.

It carries out the reaction guanosine(46) in tRNA + S-adenosyl-L-methionine = N(7)-methylguanosine(46) in tRNA + S-adenosyl-L-homocysteine. Its pathway is tRNA modification; N(7)-methylguanine-tRNA biosynthesis. Functionally, catalyzes the formation of N(7)-methylguanine at position 46 (m7G46) in tRNA. The sequence is that of tRNA (guanine-N(7)-)-methyltransferase from Staphylococcus haemolyticus (strain JCSC1435).